The primary structure comprises 230 residues: MAHPSQLGFQDAASPVMEELLHFHDHALMIVLLISTLVLYIIVAMVSTKLTNKYILDSQEIEIVWTVLPAVILILIALPSLRILYLMDEINDPHLTIKAMGHQWYWSYEYTDYEDLGFDSYMVPTQDLTPGQFRLLETDHRMVVPVESPIRVLVSAEDVLHSWAVPSLGVKMDASPGRLNQTAFIASRPGVFYGQCSEICGANHSFMPIVVEAVPLEHFEKWSTMMLEDA.

The Mitochondrial intermembrane portion of the chain corresponds to 1–14; that stretch reads MAHPSQLGFQDAAS. Residues 15 to 45 traverse the membrane as a helical segment; sequence PVMEELLHFHDHALMIVLLISTLVLYIIVAM. Topologically, residues 46–59 are mitochondrial matrix; the sequence is VSTKLTNKYILDSQ. The helical transmembrane segment at 60–87 threads the bilayer; that stretch reads EIEIVWTVLPAVILILIALPSLRILYLM. The Mitochondrial intermembrane segment spans residues 88–230; that stretch reads DEINDPHLTI…KWSTMMLEDA (143 aa). Positions 161, 196, 198, 200, 204, and 207 each coordinate Cu cation. Residue glutamate 198 participates in Mg(2+) binding.

The protein belongs to the cytochrome c oxidase subunit 2 family. As to quaternary structure, component of the cytochrome c oxidase (complex IV, CIV), a multisubunit enzyme composed of 14 subunits. The complex is composed of a catalytic core of 3 subunits MT-CO1, MT-CO2 and MT-CO3, encoded in the mitochondrial DNA, and 11 supernumerary subunits COX4I, COX5A, COX5B, COX6A, COX6B, COX6C, COX7A, COX7B, COX7C, COX8 and NDUFA4, which are encoded in the nuclear genome. The complex exists as a monomer or a dimer and forms supercomplexes (SCs) in the inner mitochondrial membrane with NADH-ubiquinone oxidoreductase (complex I, CI) and ubiquinol-cytochrome c oxidoreductase (cytochrome b-c1 complex, complex III, CIII), resulting in different assemblies (supercomplex SCI(1)III(2)IV(1) and megacomplex MCI(2)III(2)IV(2)). Found in a complex with TMEM177, COA6, COX18, COX20, SCO1 and SCO2. Interacts with TMEM177 in a COX20-dependent manner. Interacts with COX20. Interacts with COX16. The cofactor is Cu cation.

Its subcellular location is the mitochondrion inner membrane. The catalysed reaction is 4 Fe(II)-[cytochrome c] + O2 + 8 H(+)(in) = 4 Fe(III)-[cytochrome c] + 2 H2O + 4 H(+)(out). Functionally, component of the cytochrome c oxidase, the last enzyme in the mitochondrial electron transport chain which drives oxidative phosphorylation. The respiratory chain contains 3 multisubunit complexes succinate dehydrogenase (complex II, CII), ubiquinol-cytochrome c oxidoreductase (cytochrome b-c1 complex, complex III, CIII) and cytochrome c oxidase (complex IV, CIV), that cooperate to transfer electrons derived from NADH and succinate to molecular oxygen, creating an electrochemical gradient over the inner membrane that drives transmembrane transport and the ATP synthase. Cytochrome c oxidase is the component of the respiratory chain that catalyzes the reduction of oxygen to water. Electrons originating from reduced cytochrome c in the intermembrane space (IMS) are transferred via the dinuclear copper A center (CU(A)) of subunit 2 and heme A of subunit 1 to the active site in subunit 1, a binuclear center (BNC) formed by heme A3 and copper B (CU(B)). The BNC reduces molecular oxygen to 2 water molecules using 4 electrons from cytochrome c in the IMS and 4 protons from the mitochondrial matrix. This Salmo salar (Atlantic salmon) protein is Cytochrome c oxidase subunit 2 (mt-co2).